A 492-amino-acid chain; its full sequence is Cytochrome P450 monooxygenase MYCFIDRAFT_204672 (492 aa).

An N-linked (GlcNAc...) asparagine glycan is attached at Asn116. Residues 269 to 293 traverse the membrane as a helical segment; that stretch reads FLISMIFISAANGCVVSGAMLYSIA. Asn335 carries N-linked (GlcNAc...) asparagine glycosylation. Heme is bound at residue Cys430.

Belongs to the cytochrome P450 family. Heme is required as a cofactor.

The protein resides in the membrane. It functions in the pathway secondary metabolite biosynthesis. Its function is as follows. Cytochrome P450 monooxygenase; part of the gene cluster that mediates the biosynthesis of an emodin derivative that may be involved in black Sigatoka disease of banana. The pathway begins with the synthesis of atrochrysone thioester by the polyketide synthase PKS8-1. The atrochrysone carboxyl ACP thioesterase MYCFIDRAFT_190111 then breaks the thioester bond and releases the atrochrysone carboxylic acid from PKS8-1. The decarboxylase MYCFIDRAFT_34057 then catalyzes the concerted decarboxylation-elimination required to convert atochrysone carboxylic acid into emodin anthrone, which is further oxidized to emodin by the anthrone oxygenase MYCFIDRAFT_34418. The functions of the other tailoring enzymes as well as the final product of the cluster have still to be identified. The chain is Cytochrome P450 monooxygenase MYCFIDRAFT_204672 from Pseudocercospora fijiensis (strain CIRAD86) (Black leaf streak disease fungus).